Reading from the N-terminus, the 450-residue chain is Bifunctional apoptosis regulator (450 aa).

Over residues 1–20 (MEEPQKNDLSMREQEEEHPV) the composition is skewed to basic and acidic residues. Residues 1–25 (MEEPQKNDLSMREQEEEHPVRSSGP) are disordered. Residues 1–140 (MEEPQKNDLS…PSTGRVNPQR (140 aa)) lie on the Cytoplasmic side of the membrane. Residues 34–74 (CHCCYDTLVNPTTLNCGHSFCRHCLALWWMSSKKTECPECR) form an RING-type zinc finger. A helical membrane pass occupies residues 141 to 161 (GGGFFSGVLTALTGVAVILLV). Residues 162–331 (YHWRSRESEH…REPTWKQWRE (170 aa)) lie on the Extracellular side of the membrane. One can recognise an SAM domain in the interval 182–249 (WTMEEVVLWL…LTELERVRAL (68 aa)). Residues asparagine 232 and asparagine 308 are each glycosylated (N-linked (GlcNAc...) asparagine). Residues 332–352 (FLVKYSFLPYQLIAEFAWDWL) traverse the membrane as a helical segment. Topologically, residues 353–360 (EVHYWTSR) are cytoplasmic. Residues 361-381 (FLIVNAVLLSVLELFSFWRIW) traverse the membrane as a helical segment. The Extracellular segment spans residues 382–404 (SRSELKTVPQRMWSHFWKVSTQG). Residues 405–425 (LFMAMFWPLIPQFVCNCLFYW) form a helical membrane-spanning segment. Over 426 to 450 (ALYFNPIINIDLVVKEVRRLETQVL) the chain is Cytoplasmic.

Interacts with CASP8, BCL2 and BCL2L1 through SAM domain and also with HIP1, IFT57, ESRRBL1 and BCAP31. Interacts with NGFR; this interaction inhibits NF-kappa-B and JNK-related signaling pathways. In terms of processing, mediates RING-dependent self-ubiquitination leading to proteasomal degradation.

The protein localises to the endoplasmic reticulum membrane. It catalyses the reaction S-ubiquitinyl-[E2 ubiquitin-conjugating enzyme]-L-cysteine + [acceptor protein]-L-lysine = [E2 ubiquitin-conjugating enzyme]-L-cysteine + N(6)-ubiquitinyl-[acceptor protein]-L-lysine.. In terms of biological role, membrane-bound E3 ubiquitin ligase that plays a role in several processes including apoptosis regulation or reticulum endoplasmic stress. Has anti-apoptotic activity, both for apoptosis triggered via death-receptors and via mitochondrial factors. Contributes to the dynamic control of IRE1/ERN1 signaling during ER stress by inducing BAX inhibitor 1/TMBIM6 proteasomal degradation. Promotes the activation of TGF-beta signaling by mediating the 'Lys-63'-linked ubiquitination of TGFBR1 which is critical to activate the pathway. Together with NGFR, negatively regulates NF-kappa-B and JNK-related signaling pathways. Promotes the proteasome-mediated degradation of PNPLA3, a protein involveld in lipid metabolism. The protein is Bifunctional apoptosis regulator (Bfar) of Mus musculus (Mouse).